We begin with the raw amino-acid sequence, 128 residues long: Large ribosomal subunit protein bL12c (128 aa).

Belongs to the bacterial ribosomal protein bL12 family. Homodimer. Part of the ribosomal stalk of the 50S ribosomal subunit. Forms a multimeric L10(L12)X complex, where L10 forms an elongated spine to which 2 to 4 L12 dimers bind in a sequential fashion. Binds GTP-bound translation factors.

Its subcellular location is the plastid. It is found in the chloroplast. In terms of biological role, forms part of the ribosomal stalk which helps the ribosome interact with GTP-bound translation factors. Is thus essential for accurate translation. The protein is Large ribosomal subunit protein bL12c of Phaeodactylum tricornutum (strain CCAP 1055/1).